The sequence spans 176 residues: Large ribosomal subunit protein uL6 (176 aa).

The protein belongs to the universal ribosomal protein uL6 family. In terms of assembly, part of the 50S ribosomal subunit.

This protein binds to the 23S rRNA, and is important in its secondary structure. It is located near the subunit interface in the base of the L7/L12 stalk, and near the tRNA binding site of the peptidyltransferase center. The sequence is that of Large ribosomal subunit protein uL6 from Dechloromonas aromatica (strain RCB).